Consider the following 718-residue polypeptide: Serine/threonine-protein kinase tousled-like 2 (718 aa).

Residues 24–85 (GVSKGPLNSE…KGTPRGHKIS (62 aa)) form a disordered region. The span at 29–44 (PLNSESSNQSLCSVGS) shows a compositional bias: polar residues. Basic and acidic residues predominate over residues 46 to 61 (SDKEVETPEKKQNDQR). A phosphoserine mark is found at serine 73, glutamine 94, leucine 99, and serine 102. The tract at residues 147-176 (QQNSPSSTGSGNTEHSCSSQKQISIQHRQT) is disordered. Positions 193-244 (NSDLEKKEGRIDDLLRANCDLRRQIDEQQKMLEKYKERLNRCVTMSKKLLIE) are required for interaction with TLK1 and DYNLL1/LC8. Coiled coils occupy residues 193-244 (NSDL…LLIE), 285-315 (AFQN…KRKP), and 349-397 (HEQE…DNSQ). The tract at residues 310-337 (LAKRKPPAMGQAPPATNEQKQRKSKTNG) is disordered. The Protein kinase domain occupies 408–687 (YLLLHLLGRG…VQQLACDPYL (280 aa)). ATP-binding positions include 414-422 (LGRGGFSEV) and lysine 437. The active-site Proton acceptor is aspartate 538. Residue serine 696 is modified to Phosphoserine; by CHEK1.

It belongs to the protein kinase superfamily. Ser/Thr protein kinase family. As to quaternary structure, monomer. May form homodimers; homodimerization may enhance autophosphoylation and enzymatic activity. Heterodimer with TLK1. Interacts with YWHAZ; association with 14-3-3 proteins such as YWHAZ regulates subcellular location. May also interact with FEZ1/LZTS1 and FEZ2. Interacts with CHD7 and CHD8. Interacts with DYNLL1/LC8. It depends on Mg(2+) as a cofactor. In terms of processing, phosphorylated at Ser-696, probably by CHEK1. Post-translationally, autophosphorylated; phosphorylation promotes the assembly of higher order oligomers and enzymatic activity. Ubiquitously expressed in all tissues examined, with high levels in heart and testis, in particular the pachytene spermatocytes and in round spermatids. Some evidence for the existence of a testis-specific isoform suggesting a role in spermatogenesis.

It is found in the nucleus. The protein resides in the nucleoplasm. The protein localises to the cytoplasm. Its subcellular location is the perinuclear region. It localises to the cytoskeleton. It carries out the reaction L-seryl-[protein] + ATP = O-phospho-L-seryl-[protein] + ADP + H(+). The enzyme catalyses L-threonyl-[protein] + ATP = O-phospho-L-threonyl-[protein] + ADP + H(+). Cell cycle-regulated, with maximal activity in the S-phase. Rapidly and transiently inhibited by phosphorylation following the generation of DNA double-stranded breaks during S-phase, probably by CHEK1, possibly at Ser-696. This inhibition is cell cycle checkpoint- and ATM-dependent. Serine/threonine-protein kinase involved in the process of chromatin assembly and probably also DNA replication, transcription, repair, and chromosome segregation. Phosphorylates the chromatin assembly factors ASF1A and ASF1B. Phosphorylation of ASF1A prevents its proteasome-mediated degradation, thereby enhancing chromatin assembly. Negative regulator of amino acid starvation-induced autophagy. In terms of biological role, testis-specific isoforms may play a role in spermatogenesis. Highly expressed in embryos throughout development. This chain is Serine/threonine-protein kinase tousled-like 2 (Tlk2), found in Mus musculus (Mouse).